The sequence spans 276 residues: uncharacterized protein (276 aa).

Catalysis depends on Tyr47, which acts as the Proton donor. His110 is a binding site for substrate.

This sequence belongs to the aldo/keto reductase family.

The protein resides in the cytoplasm. The protein localises to the nucleus. This is an uncharacterized protein from Schizosaccharomyces pombe (strain 972 / ATCC 24843) (Fission yeast).